The primary structure comprises 206 residues: Small ribosomal subunit protein uS4 (206 aa).

The 61-residue stretch at 96 to 156 (GRLDNVVYRM…EKAKKQSRVK (61 aa)) folds into the S4 RNA-binding domain.

This sequence belongs to the universal ribosomal protein uS4 family. Part of the 30S ribosomal subunit. Contacts protein S5. The interaction surface between S4 and S5 is involved in control of translational fidelity.

In terms of biological role, one of the primary rRNA binding proteins, it binds directly to 16S rRNA where it nucleates assembly of the body of the 30S subunit. With S5 and S12 plays an important role in translational accuracy. In Enterobacter sp. (strain 638), this protein is Small ribosomal subunit protein uS4.